The chain runs to 140 residues: Profilin-2 (140 aa).

Position 2 is an N-acetylalanine (Ala-2).

Belongs to the profilin family. Occurs in many kinds of cells as a complex with monomeric actin in a 1:1 ratio. Interacts with PFN2. Interacts with ACTMAP (via N-terminus); the interaction may facilitate efficient cleavage of the acetylated N-terminus of immature actin by ACTMAP.

It is found in the cytoplasm. The protein localises to the cytoskeleton. Binds to actin and affects the structure of the cytoskeleton. At high concentrations, profilin prevents the polymerization of actin, whereas it enhances it at low concentrations. By binding to PIP2, it inhibits the formation of IP3 and DG. The polypeptide is Profilin-2 (Pfn2) (Rattus norvegicus (Rat)).